Reading from the N-terminus, the 510-residue chain is ATP synthase subunit alpha (510 aa).

169–176 (GDRQTGKT) contributes to the ATP binding site.

Belongs to the ATPase alpha/beta chains family. F-type ATPases have 2 components, CF(1) - the catalytic core - and CF(0) - the membrane proton channel. CF(1) has five subunits: alpha(3), beta(3), gamma(1), delta(1), epsilon(1). CF(0) has three main subunits: a(1), b(2) and c(9-12). The alpha and beta chains form an alternating ring which encloses part of the gamma chain. CF(1) is attached to CF(0) by a central stalk formed by the gamma and epsilon chains, while a peripheral stalk is formed by the delta and b chains.

Its subcellular location is the cell inner membrane. The catalysed reaction is ATP + H2O + 4 H(+)(in) = ADP + phosphate + 5 H(+)(out). Its function is as follows. Produces ATP from ADP in the presence of a proton gradient across the membrane. The alpha chain is a regulatory subunit. In Nitrobacter winogradskyi (strain ATCC 25391 / DSM 10237 / CIP 104748 / NCIMB 11846 / Nb-255), this protein is ATP synthase subunit alpha.